We begin with the raw amino-acid sequence, 157 residues long: 6,7-dimethyl-8-ribityllumazine synthase (157 aa).

Residues Phe-22, 56-58 (AFE), and 81-83 (VLI) each bind 5-amino-6-(D-ribitylamino)uracil. Position 86–87 (86–87 (ET)) interacts with (2S)-2-hydroxy-3-oxobutyl phosphate. The active-site Proton donor is His-89. Phe-114 contributes to the 5-amino-6-(D-ribitylamino)uracil binding site. A (2S)-2-hydroxy-3-oxobutyl phosphate-binding site is contributed by Arg-128.

This sequence belongs to the DMRL synthase family.

It carries out the reaction (2S)-2-hydroxy-3-oxobutyl phosphate + 5-amino-6-(D-ribitylamino)uracil = 6,7-dimethyl-8-(1-D-ribityl)lumazine + phosphate + 2 H2O + H(+). It participates in cofactor biosynthesis; riboflavin biosynthesis; riboflavin from 2-hydroxy-3-oxobutyl phosphate and 5-amino-6-(D-ribitylamino)uracil: step 1/2. In terms of biological role, catalyzes the formation of 6,7-dimethyl-8-ribityllumazine by condensation of 5-amino-6-(D-ribitylamino)uracil with 3,4-dihydroxy-2-butanone 4-phosphate. This is the penultimate step in the biosynthesis of riboflavin. This chain is 6,7-dimethyl-8-ribityllumazine synthase, found in Chlamydia trachomatis serovar L2 (strain ATCC VR-902B / DSM 19102 / 434/Bu).